A 305-amino-acid chain; its full sequence is Homoserine kinase (305 aa).

90-100 (PLARGLGSSAS) is an ATP binding site.

This sequence belongs to the GHMP kinase family. Homoserine kinase subfamily.

The protein localises to the cytoplasm. It carries out the reaction L-homoserine + ATP = O-phospho-L-homoserine + ADP + H(+). It functions in the pathway amino-acid biosynthesis; L-threonine biosynthesis; L-threonine from L-aspartate: step 4/5. Functionally, catalyzes the ATP-dependent phosphorylation of L-homoserine to L-homoserine phosphate. This is Homoserine kinase from Staphylococcus saprophyticus subsp. saprophyticus (strain ATCC 15305 / DSM 20229 / NCIMB 8711 / NCTC 7292 / S-41).